The primary structure comprises 768 residues: Lon protease (768 aa).

Residues 4–198 (APFLPIRDLV…RILDEIVAEM (195 aa)) enclose the Lon N-terminal domain. An ATP-binding site is contributed by 349 to 356 (GPPGIGKT). The region spanning 586–768 (TGKIGVVNGL…DDVSKLVFVK (183 aa)) is the Lon proteolytic domain. Residues Ser674 and Lys717 contribute to the active site.

It belongs to the peptidase S16 family. Homohexamer. Organized in a ring with a central cavity.

It is found in the cytoplasm. The catalysed reaction is Hydrolysis of proteins in presence of ATP.. Functionally, ATP-dependent serine protease that mediates the selective degradation of mutant and abnormal proteins as well as certain short-lived regulatory proteins. Required for cellular homeostasis and for survival from DNA damage and developmental changes induced by stress. Degrades polypeptides processively to yield small peptide fragments that are 5 to 10 amino acids long. Binds to DNA in a double-stranded, site-specific manner. This is Lon protease from Fusobacterium nucleatum subsp. nucleatum (strain ATCC 25586 / DSM 15643 / BCRC 10681 / CIP 101130 / JCM 8532 / KCTC 2640 / LMG 13131 / VPI 4355).